We begin with the raw amino-acid sequence, 200 residues long: Inner membrane-spanning protein YciB (200 aa).

Helical transmembrane passes span 1 to 21 (MPPL…FFAN), 37 to 57 (IGAP…IALA), 66 to 86 (LAIM…LTLW), 103 to 123 (LFGG…GYVF), 136 to 156 (KLTL…EIVW), and 167 to 187 (FKVW…MPLI).

Belongs to the YciB family.

The protein resides in the cell inner membrane. Functionally, plays a role in cell envelope biogenesis, maintenance of cell envelope integrity and membrane homeostasis. This Brucella melitensis biotype 1 (strain ATCC 23456 / CCUG 17765 / NCTC 10094 / 16M) protein is Inner membrane-spanning protein YciB.